Consider the following 429-residue polypeptide: Serine--tRNA ligase (429 aa).

234–236 (TSE) is an L-serine binding site. Residues 265 to 267 (RKE) and Val281 contribute to the ATP site. L-serine is bound at residue Glu288. ATP is bound at residue 352-355 (ELVS). Residue Thr389 participates in L-serine binding.

It belongs to the class-II aminoacyl-tRNA synthetase family. Type-1 seryl-tRNA synthetase subfamily. In terms of assembly, homodimer. The tRNA molecule probably binds across the dimer.

The catalysed reaction is tRNA(Ser) + L-serine + ATP = L-seryl-tRNA(Ser) + AMP + diphosphate + H(+). It catalyses the reaction tRNA(Sec) + L-serine + ATP = L-seryl-tRNA(Sec) + AMP + diphosphate + H(+). Its pathway is aminoacyl-tRNA biosynthesis; selenocysteinyl-tRNA(Sec) biosynthesis; L-seryl-tRNA(Sec) from L-serine and tRNA(Sec): step 1/1. Catalyzes the attachment of serine to tRNA(Ser). Is also probably able to aminoacylate tRNA(Sec) with serine, to form the misacylated tRNA L-seryl-tRNA(Sec), which will be further converted into selenocysteinyl-tRNA(Sec). This chain is Serine--tRNA ligase, found in Encephalitozoon cuniculi (strain GB-M1) (Microsporidian parasite).